Consider the following 83-residue polypeptide: Small ribosomal subunit protein bS18 (83 aa).

This sequence belongs to the bacterial ribosomal protein bS18 family. Part of the 30S ribosomal subunit. Forms a tight heterodimer with protein bS6.

Functionally, binds as a heterodimer with protein bS6 to the central domain of the 16S rRNA, where it helps stabilize the platform of the 30S subunit. This Cytophaga hutchinsonii (strain ATCC 33406 / DSM 1761 / CIP 103989 / NBRC 15051 / NCIMB 9469 / D465) protein is Small ribosomal subunit protein bS18.